The chain runs to 179 residues: Sec-independent protein translocase protein TatB (179 aa).

The chain crosses the membrane as a helical span at residues 1 to 21 (MLDLGLSKMALIGVVALVVLG). Over residues 101-115 (GAAGDAGSVGSPGSD) the composition is skewed to low complexity. The disordered stretch occupies residues 101-134 (GAAGDAGSVGSPGSDTPAAPSWRGSSAALAPKRR).

It belongs to the TatB family. As to quaternary structure, the Tat system comprises two distinct complexes: a TatABC complex, containing multiple copies of TatA, TatB and TatC subunits, and a separate TatA complex, containing only TatA subunits. Substrates initially bind to the TatABC complex, which probably triggers association of the separate TatA complex to form the active translocon.

Its subcellular location is the cell inner membrane. In terms of biological role, part of the twin-arginine translocation (Tat) system that transports large folded proteins containing a characteristic twin-arginine motif in their signal peptide across membranes. Together with TatC, TatB is part of a receptor directly interacting with Tat signal peptides. TatB may form an oligomeric binding site that transiently accommodates folded Tat precursor proteins before their translocation. This is Sec-independent protein translocase protein TatB from Burkholderia orbicola (strain AU 1054).